A 616-amino-acid polypeptide reads, in one-letter code: Dihydroxy-acid dehydratase (616 aa).

Residue D81 coordinates Mg(2+). C122 lines the [2Fe-2S] cluster pocket. Residues D123 and K124 each coordinate Mg(2+). N6-carboxylysine is present on K124. C195 is a binding site for [2Fe-2S] cluster. E491 contributes to the Mg(2+) binding site. S517 acts as the Proton acceptor in catalysis.

The protein belongs to the IlvD/Edd family. Homodimer. [2Fe-2S] cluster is required as a cofactor. It depends on Mg(2+) as a cofactor.

The catalysed reaction is (2R)-2,3-dihydroxy-3-methylbutanoate = 3-methyl-2-oxobutanoate + H2O. It carries out the reaction (2R,3R)-2,3-dihydroxy-3-methylpentanoate = (S)-3-methyl-2-oxopentanoate + H2O. The protein operates within amino-acid biosynthesis; L-isoleucine biosynthesis; L-isoleucine from 2-oxobutanoate: step 3/4. It participates in amino-acid biosynthesis; L-valine biosynthesis; L-valine from pyruvate: step 3/4. Functionally, functions in the biosynthesis of branched-chain amino acids. Catalyzes the dehydration of (2R,3R)-2,3-dihydroxy-3-methylpentanoate (2,3-dihydroxy-3-methylvalerate) into 2-oxo-3-methylpentanoate (2-oxo-3-methylvalerate) and of (2R)-2,3-dihydroxy-3-methylbutanoate (2,3-dihydroxyisovalerate) into 2-oxo-3-methylbutanoate (2-oxoisovalerate), the penultimate precursor to L-isoleucine and L-valine, respectively. The polypeptide is Dihydroxy-acid dehydratase (Escherichia coli O17:K52:H18 (strain UMN026 / ExPEC)).